The following is a 59-amino-acid chain: Large ribosomal subunit protein bL32 (59 aa).

It belongs to the bacterial ribosomal protein bL32 family.

The sequence is that of Large ribosomal subunit protein bL32 from Thermodesulfovibrio yellowstonii (strain ATCC 51303 / DSM 11347 / YP87).